A 957-amino-acid chain; its full sequence is Glycine dehydrogenase (decarboxylating) (957 aa).

An N6-(pyridoxal phosphate)lysine modification is found at K708.

The protein belongs to the GcvP family. The glycine cleavage system is composed of four proteins: P, T, L and H. Requires pyridoxal 5'-phosphate as cofactor.

The catalysed reaction is N(6)-[(R)-lipoyl]-L-lysyl-[glycine-cleavage complex H protein] + glycine + H(+) = N(6)-[(R)-S(8)-aminomethyldihydrolipoyl]-L-lysyl-[glycine-cleavage complex H protein] + CO2. Functionally, the glycine cleavage system catalyzes the degradation of glycine. The P protein binds the alpha-amino group of glycine through its pyridoxal phosphate cofactor; CO(2) is released and the remaining methylamine moiety is then transferred to the lipoamide cofactor of the H protein. This Escherichia coli O6:H1 (strain CFT073 / ATCC 700928 / UPEC) protein is Glycine dehydrogenase (decarboxylating).